The primary structure comprises 167 residues: Epithelial membrane protein 2 (167 aa).

A helical membrane pass occupies residues 1 to 21 (MLVLLAFIIVFHITSAALLLV). Asparagine 44, asparagine 47, and asparagine 52 each carry an N-linked (GlcNAc...) asparagine glycan. 3 consecutive transmembrane segments (helical) span residues 67–87 (TMIL…LQLF), 95–115 (FVLT…AASI), and 143–163 (FILA…YLIL).

It belongs to the PMP-22/EMP/MP20 family. In terms of assembly, interacts with PTK2; regulates PTK2 activation and localization. Interacts with ITGB3; regulates the levels of the heterodimer ITGA5-ITGB3 integrin surface expression. Interacts with P2RX7 (via C-terminus). Interacts with ITGB1; the interaction may be direct or indirect and ITGB1 has a heterodimer form.

The protein resides in the golgi apparatus membrane. It localises to the cell membrane. Its subcellular location is the apical cell membrane. It is found in the membrane raft. The protein localises to the cytoplasm. The protein resides in the nucleus. It localises to the perinuclear region. In terms of biological role, functions as a key regulator of cell membrane composition by regulating protein surface expression. Also, plays a role in regulation of processes including cell migration, cell proliferation, cell contraction and cell adhesion. Regulates transepithelial migration of neutrophils into the alveolar lumen, potentially via mediation of cell surface expression of adhesion markers and lipid raft formation. Negatively regulates caveolae formation by reducing CAV1 expression and CAV1 amount by increasing lysosomal degradation. Facilitates surface trafficking and the formation of lipid rafts bearing GPI-anchor proteins. Regulates surface expression of MHC1 and ICAM1 proteins increasing susceptibility to T-cell mediated cytotoxicity. Regulates the plasma membrane expression of the integrin heterodimers ITGA6-ITGB1, ITGA5-ITGB3 and ITGA5-ITGB1 resulting in modulation of cell-matrix adhesion. Also regulates many processes through PTK2. Regulates blood vessel endothelial cell migration and angiogenesis by regulating VEGF protein expression through PTK2 activation. Regulates cell migration and cell contraction through PTK2 and SRC activation. Regulates focal adhesion density, F-actin conformation and cell adhesion capacity through interaction with PTK2. Positively regulates cell proliferation. Plays a role during cell death and cell blebbing. Promotes angiogenesis and vasculogenesis through induction of VEGFA via a HIF1A-dependent pathway. Also plays a role in embryo implantation by regulating surface trafficking of integrin heterodimer ITGA5-ITGB3. Plays a role in placental angiogenesis and uterine natural killer cell regulation at the maternal-fetal placental interface, however not required in the maternal tissues for a viable pregnancy. Involved in the early stages of embryogenic development and cardiogenesis, potentially via regulation of epithelial-mesenchymal transition timing. May play a role in glomerular filtration. In Bos taurus (Bovine), this protein is Epithelial membrane protein 2 (EMP2).